The sequence spans 338 residues: Increasing suppression factor 1 (338 aa).

The segment covering 50 to 70 (ENSSKSNNSHHSSSTNAGNTS) has biased composition (low complexity). A disordered region spans residues 50–72 (ENSSKSNNSHHSSSTNAGNTSRH). Residue S119 is modified to Phosphoserine. Over residues 267–306 (SLLSNGSSSSPLQTRNNSYSNSLVKSPSNSSLNTSVASSN) the composition is skewed to low complexity. The segment at 267–322 (SLLSNGSSSSPLQTRNNSYSNSLVKSPSNSSLNTSVASSNEESSPHTSNCLEERNP) is disordered. Positions 307 to 316 (EESSPHTSNC) are enriched in polar residues.

It belongs to the ISF1/MBR1 family.

Functionally, could influence the NAM7/UPF1 function, possibly at the level of mRNA turnover. Participates in mitochondrial biogenesis. The polypeptide is Increasing suppression factor 1 (ISF1) (Saccharomyces cerevisiae (strain JAY291) (Baker's yeast)).